The following is a 165-amino-acid chain: Growth arrest and DNA damage-inducible protein GADD45 alpha (165 aa).

The residue at position 2 (T2) is a Phosphothreonine.

It belongs to the GADD45 family. Interacts with AURKA, GADD45GIP1 and PCNA. Interacts with MAPK14.

Its subcellular location is the nucleus. In terms of biological role, might affect PCNA interaction with some CDK (cell division protein kinase) complexes; stimulates DNA excision repair in vitro and inhibits entry of cells into S phase. In T-cells, functions as a regulator of p38 MAPKs by inhibiting p88 phosphorylation and activity. This chain is Growth arrest and DNA damage-inducible protein GADD45 alpha (Gadd45a), found in Mus musculus (Mouse).